A 275-amino-acid chain; its full sequence is uncharacterized protein (275 aa).

The 98-residue stretch at Lys-171–Ile-268 folds into the HTH araC/xylS-type domain. 2 consecutive DNA-binding regions (H-T-H motif) follow at residues Asn-188 to Lys-209 and Pro-235 to Val-258.

This is an uncharacterized protein from Bacillus subtilis (strain 168).